A 362-amino-acid polypeptide reads, in one-letter code: Dihydroorotate dehydrogenase (quinone) (362 aa).

Residues 62-66 (AGYDK) and T86 each bind FMN. K66 contacts substrate. 111–115 (NRLGF) contacts substrate. FMN is bound by residues N139 and N170. N170 contributes to the substrate binding site. S173 (nucleophile) is an active-site residue. Position 175 (N175) interacts with substrate. 2 residues coordinate FMN: K215 and S243. 244-245 (NT) is a binding site for substrate. Residues G266, G295, and 316-317 (YS) each bind FMN.

This sequence belongs to the dihydroorotate dehydrogenase family. Type 2 subfamily. In terms of assembly, monomer. FMN is required as a cofactor.

It localises to the cell membrane. It carries out the reaction (S)-dihydroorotate + a quinone = orotate + a quinol. It functions in the pathway pyrimidine metabolism; UMP biosynthesis via de novo pathway; orotate from (S)-dihydroorotate (quinone route): step 1/1. In terms of biological role, catalyzes the conversion of dihydroorotate to orotate with quinone as electron acceptor. This is Dihydroorotate dehydrogenase (quinone) from Rhizobium etli (strain CIAT 652).